Here is a 548-residue protein sequence, read N- to C-terminus: Peptidyl-prolyl isomerase CWC27 (548 aa).

Residues 11–193 (PTASVIIHTT…YPVKIERIEI (183 aa)) enclose the PPIase cyclophilin-type domain. Disordered regions lie at residues 204 to 436 (RSRV…GDEE) and 504 to 548 (TLKD…RGAK). Basic and acidic residues-rich tracts occupy residues 328-340 (EAPR…RANE), 353-366 (IHSE…KKSA), 406-428 (RLEK…KDGE), and 504-516 (TLKD…RDAR).

The protein belongs to the cyclophilin-type PPIase family. CWC27 subfamily. Associated with the spliceosome.

The protein resides in the cytoplasm. It localises to the nucleus. It carries out the reaction [protein]-peptidylproline (omega=180) = [protein]-peptidylproline (omega=0). Functionally, PPIases accelerate the folding of proteins. It catalyzes the cis-trans isomerization of proline imidic peptide bonds in oligopeptides. Involved in pre-mRNA splicing. The protein is Peptidyl-prolyl isomerase CWC27 (CWC27) of Gibberella zeae (strain ATCC MYA-4620 / CBS 123657 / FGSC 9075 / NRRL 31084 / PH-1) (Wheat head blight fungus).